The primary structure comprises 551 residues: MTGSLASNYASWKQLQEIYDKDRAKIVLRDLFAADPQRFSKLSATYNSQSGPGVQILLDYSKHLVTEPILQKLFNLLREAKVEDARDKMFSGEHINTSEDRAVLHVALRNFNDFSIKEEGVDEVSKVLQHMKEFSESVRSGQWKGYTGKTINTIVNIGIGGSDLGPVMVTEALKPFSKRDLNAHFVSNIDGTHIAETLRLCDPERTLFIVASKTFTTQETITNAESARDWFLGFAKDKAHVAKHFVALSTNTSAVTAFGISEANMFQFWDWVGGRYSLWSAIGLSIALVIGFDNFEKLLRGAHAMDQHFKTTPLEKNLPAIMAALGIWCNDFYGAQTLALLPYDQYLHKFADYFQQGDMESNGKFITKNGDRVNYQTGPIIWGASGTNGQHSFYQLIHQGTKIIPADFMAPATSHNPIANSKHHRILLSNFFAQPEALAFGKTEEEVRKELGQNASEALVKSKVFEGNRPSSSLMFDKLDPATLGALIALYEHKIFVQGVVWGINSFDQMGVELGKVLAKQILAQLDKSDDVKGHDSSVRHLPFILQVDHC.

Residues 161–162 (GS), 212–217 (SKTFTT), glutamine 356, glutamate 360, histidine 391, and lysine 516 contribute to the D-glucose 6-phosphate site. Glutamate 360 functions as the Proton donor in the catalytic mechanism. Catalysis depends on residues histidine 391 and lysine 516.

Belongs to the GPI family. As to quaternary structure, homodimer.

Its subcellular location is the cytoplasm. The protein resides in the cytosol. The enzyme catalyses alpha-D-glucose 6-phosphate = beta-D-fructose 6-phosphate. Its pathway is carbohydrate degradation; glycolysis; D-glyceraldehyde 3-phosphate and glycerone phosphate from D-glucose: step 2/4. Its function is as follows. In the cytoplasm, catalyzes the conversion of glucose-6-phosphate to fructose-6-phosphate, the second step in glycolysis, and the reverse reaction during gluconeogenesis. This Agaricus bisporus (White button mushroom) protein is Glucose-6-phosphate isomerase (gpi1).